Here is a 421-residue protein sequence, read N- to C-terminus: Histidine--tRNA ligase (421 aa).

It belongs to the class-II aminoacyl-tRNA synthetase family. As to quaternary structure, homodimer.

It is found in the cytoplasm. The catalysed reaction is tRNA(His) + L-histidine + ATP = L-histidyl-tRNA(His) + AMP + diphosphate + H(+). This chain is Histidine--tRNA ligase, found in Natranaerobius thermophilus (strain ATCC BAA-1301 / DSM 18059 / JW/NM-WN-LF).